Here is a 362-residue protein sequence, read N- to C-terminus: Phosphoserine aminotransferase (362 aa).

L-glutamate-binding residues include serine 9 and arginine 42. Pyridoxal 5'-phosphate-binding positions include glycine 76–arginine 77, tryptophan 102, threonine 153, aspartate 174, and glutamine 197. Lysine 198 is modified (N6-(pyridoxal phosphate)lysine). Residue asparagine 239–threonine 240 coordinates pyridoxal 5'-phosphate.

It belongs to the class-V pyridoxal-phosphate-dependent aminotransferase family. SerC subfamily. Homodimer. Requires pyridoxal 5'-phosphate as cofactor.

It is found in the cytoplasm. It carries out the reaction O-phospho-L-serine + 2-oxoglutarate = 3-phosphooxypyruvate + L-glutamate. The catalysed reaction is 4-(phosphooxy)-L-threonine + 2-oxoglutarate = (R)-3-hydroxy-2-oxo-4-phosphooxybutanoate + L-glutamate. It participates in amino-acid biosynthesis; L-serine biosynthesis; L-serine from 3-phospho-D-glycerate: step 2/3. The protein operates within cofactor biosynthesis; pyridoxine 5'-phosphate biosynthesis; pyridoxine 5'-phosphate from D-erythrose 4-phosphate: step 3/5. Functionally, catalyzes the reversible conversion of 3-phosphohydroxypyruvate to phosphoserine and of 3-hydroxy-2-oxo-4-phosphonooxybutanoate to phosphohydroxythreonine. The chain is Phosphoserine aminotransferase from Escherichia fergusonii (strain ATCC 35469 / DSM 13698 / CCUG 18766 / IAM 14443 / JCM 21226 / LMG 7866 / NBRC 102419 / NCTC 12128 / CDC 0568-73).